A 259-amino-acid polypeptide reads, in one-letter code: Trypsin (259 aa).

An N-terminal signal peptide occupies residues 1–32 (MKHFLRALKRCSVAVATVAIAVVGLQPVTASA). A propeptide spans 33-36 (APNP) (activation peptide). Residues 37-257 (VVGGTRAAQG…FASAIASAAR (221 aa)) enclose the Peptidase S1 domain. Cysteines 58 and 74 form a disulfide. Residues H73 and D118 each act as charge relay system in the active site. 2 disulfide bridges follow: C177–C192 and C204–C233. The active-site Charge relay system is the S208.

This sequence belongs to the peptidase S1 family.

It catalyses the reaction Preferential cleavage: Arg-|-Xaa, Lys-|-Xaa.. This is Trypsin (sprT) from Streptomyces griseus.